The primary structure comprises 503 residues: Maturase K (503 aa).

This sequence belongs to the intron maturase 2 family. MatK subfamily.

Its subcellular location is the plastid. The protein localises to the chloroplast. Usually encoded in the trnK tRNA gene intron. Probably assists in splicing its own and other chloroplast group II introns. The protein is Maturase K of Callistemon polandii (Gold-tipped bottlebrush).